Reading from the N-terminus, the 318-residue chain is Glutathione synthetase (318 aa).

The ATP-grasp domain maps to 129 to 314; sequence KLAITEFPDL…VPEMFAVALE (186 aa). 155–211 contacts ATP; it reads HAAQGDVIVKPLDGMGGTGIFRLQRSEPNLNAILETLTDNGTRTIMAQRYIPEIVKG. Positions 285 and 287 each coordinate Mg(2+).

The protein belongs to the prokaryotic GSH synthase family. Mg(2+) serves as cofactor. Requires Mn(2+) as cofactor.

It carries out the reaction gamma-L-glutamyl-L-cysteine + glycine + ATP = glutathione + ADP + phosphate + H(+). The protein operates within sulfur metabolism; glutathione biosynthesis; glutathione from L-cysteine and L-glutamate: step 2/2. The protein is Glutathione synthetase of Bordetella bronchiseptica (strain ATCC BAA-588 / NCTC 13252 / RB50) (Alcaligenes bronchisepticus).